The sequence spans 521 residues: HTH-type transcriptional regulatory protein TyrR (521 aa).

An ACT domain is found at 2–72 (RLEVFCQDRI…GVTDVRTVPY (71 aa)). Residues 78 to 120 (EHRVLSALLVAMPEPVFSVDLRTKVELANPAAQNLFNLDENKI) enclose the PAS domain. The Sigma-54 factor interaction domain maps to 207–436 (IVAVTPRMRQ…LKNALYRALT (230 aa)). Residues 235-242 (GDTGTGKD) and 298-307 (ANGGSVLLDE) each bind ATP. The segment at residues 489 to 509 (STRKLAKRLGVSHTAIANKLR) is a DNA-binding region (H-T-H motif).

As to quaternary structure, homodimer. In presence of tyrosine (or high concentrations of phenylalanine or tryptophan) and ATP, it self-associates to form an hexamer.

The protein localises to the cytoplasm. Dual transcriptional regulator of the TyrR regulon, which includes a number of genes coding for proteins involved in the biosynthesis or transport of the three aromatic amino acids, phenylalanine, tyrosine and tryptophan. These three aromatic amino acids act as effectors which bind to the TyrR protein to form an active regulatory protein. Acts by binding specifically to TyrR boxes in the promoter region of the target genes. In Enterobacter agglomerans (Erwinia herbicola), this protein is HTH-type transcriptional regulatory protein TyrR.